The chain runs to 585 residues: uncharacterized protein (585 aa).

The interval 27–59 (DDSERSVKSVSVSISDDEDSKTDVQDNMATPST) is disordered.

This is an uncharacterized protein from Saccharomyces cerevisiae (strain ATCC 204508 / S288c) (Baker's yeast).